The sequence spans 535 residues: Ribonuclease Y (535 aa).

A helical transmembrane segment spans residues 30-50 (IWALPALVIGLAIGAGIGILI). Positions 225-285 (TVSTVALPSE…VRREVARLAL (61 aa)) constitute a KH domain. Positions 351-444 (VLQHSLECAL…VQAVDAISGG (94 aa)) constitute an HD domain.

The protein belongs to the RNase Y family.

Its subcellular location is the cell membrane. In terms of biological role, endoribonuclease that initiates mRNA decay. In Roseiflexus sp. (strain RS-1), this protein is Ribonuclease Y.